Consider the following 345-residue polypeptide: Phosphoribosylformylglycinamidine cyclo-ligase (345 aa).

The protein belongs to the AIR synthase family.

The protein localises to the cytoplasm. The catalysed reaction is 2-formamido-N(1)-(5-O-phospho-beta-D-ribosyl)acetamidine + ATP = 5-amino-1-(5-phospho-beta-D-ribosyl)imidazole + ADP + phosphate + H(+). The protein operates within purine metabolism; IMP biosynthesis via de novo pathway; 5-amino-1-(5-phospho-D-ribosyl)imidazole from N(2)-formyl-N(1)-(5-phospho-D-ribosyl)glycinamide: step 2/2. The protein is Phosphoribosylformylglycinamidine cyclo-ligase of Salmonella typhi.